The following is a 326-amino-acid chain: Ras association domain-containing protein 2 (326 aa).

The segment at 111–133 (EVDAPPEGDQMPSSTDSRGLKPL) is disordered. Positions 176–264 (YNHKTSVFTP…SKVFLMEKDQ (89 aa)) constitute a Ras-associating domain. The SARAH domain occupies 272–319 (VAQYIKFEMPVLKSFIQKLQEEEDREVKKLMRKYTVLRLMIRQRLEEI).

As to quaternary structure, interacts directly with activated KRAS in a GTP-dependent manner. Interacts (via SARAH domain) with STK3/MST2 and STK4/MST1. Phosphorylated by STK3/MST2 and STK4/MST1. Widely expressed with highest levels in brain, placenta, peripheral blood and lung. Frequently down-regulated in lung tumor cell lines.

Its subcellular location is the nucleus. The protein localises to the cytoplasm. It localises to the chromosome. The protein resides in the centromere. It is found in the kinetochore. Its function is as follows. Potential tumor suppressor. Acts as a KRAS-specific effector protein. May promote apoptosis and cell cycle arrest. Stabilizes STK3/MST2 by protecting it from proteasomal degradation. The polypeptide is Ras association domain-containing protein 2 (RASSF2) (Homo sapiens (Human)).